The following is an 867-amino-acid chain: Bifunctional cis-abienol synthase, chloroplastic (867 aa).

Residues 1–49 (MALPVYSLKSHIPITTIASAKMNYTPNKGMITANGRSRRIRLSPNKIVA) constitute a chloroplast transit peptide. K270 contacts substrate. A DXDD motif motif is present at residues 403 to 406 (DIDD). Substrate is bound at residue K490. The Mg(2+) site is built by D622, D626, N763, D764, T767, and E771. A DDXXD motif motif is present at residues 622–626 (DDLYD).

Belongs to the terpene synthase family. Tpsd subfamily. Mg(2+) serves as cofactor.

The protein resides in the plastid. The protein localises to the chloroplast. It catalyses the reaction 8-hydroxycopalyl diphosphate = cis-abienol + diphosphate. The enzyme catalyses (2E,6E,10E)-geranylgeranyl diphosphate + H2O = 8-hydroxycopalyl diphosphate. The protein operates within terpene metabolism; oleoresin biosynthesis. Its function is as follows. Involved in the biosynthesis of cis-abienol, a labdane diterpene that can be used as synthesis precursor of ambergris substitution fragance products. Bifunctional class I/II enzyme in which both the bicyclization and water capture occur in the class II active site, resulting in an intermediary labda-13-en-8-ol diphosphate, which undergoes cleavage of the diphosphate group and final deprotonation at the class I active site. No activity with copalyl diphosphate as substrate. The chain is Bifunctional cis-abienol synthase, chloroplastic (CAS) from Abies balsamea (Balsam fir).